We begin with the raw amino-acid sequence, 327 residues long: Ribosomal RNA large subunit methyltransferase F (327 aa).

The interval 1-24 (MPRKTSSQPRPAEPKAVLHPRNRH) is disordered.

Belongs to the methyltransferase superfamily. METTL16/RlmF family.

It localises to the cytoplasm. It carries out the reaction adenosine(1618) in 23S rRNA + S-adenosyl-L-methionine = N(6)-methyladenosine(1618) in 23S rRNA + S-adenosyl-L-homocysteine + H(+). Specifically methylates the adenine in position 1618 of 23S rRNA. The polypeptide is Ribosomal RNA large subunit methyltransferase F (Stutzerimonas stutzeri (strain A1501) (Pseudomonas stutzeri)).